The sequence spans 169 residues: Cell cycle link protein (169 aa).

Residues 9–22 (LPEELRQKIVHDHL) are binding to host SKP1 protein. The LXCXE motif, interaction with host RBR signature appears at 110-114 (LLCRE).

This sequence belongs to the nanovirus Clink protein family. Interacts with host SKP1. Interacts (via LXCXE domain) with host retinoblastoma-related protein 1 (RBR1). Interacts (via LXCXE domain) with retinoblastoma-related proteins (RBR).

Its function is as follows. Interacts with and disrupts the function of host retinoblastoma-related proteins RBR, which are key regulators of the cell cycle. Induces transcriptional activation of E2F-regulated S-phase and G2/M-phase-specific genes. Inactivation of the ability of RBR to arrest the cell cycle leads to the stimulation of viral DNA replication. The chain is Cell cycle link protein (DNA-C) from Cicer arietinum (Chickpea).